The chain runs to 331 residues: Low affinity immunoglobulin epsilon Fc receptor (331 aa).

Over 1–23 (MEENEYSGYWEPPRKRCCCARRG) the chain is Cytoplasmic. S-palmitoyl cysteine attachment occurs at residues Cys-17 and Cys-18. The chain crosses the membrane as a helical; Signal-anchor for type II membrane protein span at residues 24 to 49 (TQLMLVGLLSTAMWAGLLALLLLWHW). Topologically, residues 50–331 (ETEKNLKQLG…PTRPTPKSEP (282 aa)) are extracellular. Asn-65 is a glycosylation site (N-linked (GlcNAc...) asparagine). Repeats lie at residues 71–91 (KDLQKFQSNQLAQKSQVVQMS), 92–112 (QNLQELQAEQKQMKAQDSRLS), and 113–133 (QNLTGLQEDLRNAQSQNSKLS). An N-linked (GlcNAc...) asparagine glycan is attached at Asn-114. Intrachain disulfides connect Cys-183–Cys-311, Cys-186–Cys-197, Cys-214–Cys-305, and Cys-282–Cys-296. A C-type lectin domain is found at 185–298 (ICPKNWLHFQ…GQWNDAFCRS (114 aa)). Residues Glu-272, Asn-292, and Asp-293 each contribute to the Ca(2+) site. The O-linked (Xyl...) (chondroitin sulfate) serine glycan is linked to Ser-319.

As to quaternary structure, homotrimer. Interacts (via C-type lectin domain) with IGHE (via CH3 region); this interaction regulates IgE homeostasis. Interacts (via C-terminus) with CR2/CD21 (via Sushi domain 1 and 2). Post-translationally, N- and O-glycosylated.

It localises to the cell membrane. It is found in the secreted. Low-affinity receptor for immunoglobulin E (IgE) and CR2/CD21. Has essential roles in the regulation of IgE production and in the differentiation of B cells. On B cells, initiates IgE-dependent antigen uptake and presentation to T cells. On macrophages, upon IgE binding and antigen cross-linking induces intracellular killing of parasites through activation of L-Arginine-nitric oxide pathway. In Mus musculus (Mouse), this protein is Low affinity immunoglobulin epsilon Fc receptor (Fcer2).